We begin with the raw amino-acid sequence, 232 residues long: Large ribosomal subunit protein uL1 (232 aa).

This sequence belongs to the universal ribosomal protein uL1 family. As to quaternary structure, part of the 50S ribosomal subunit.

In terms of biological role, binds directly to 23S rRNA. The L1 stalk is quite mobile in the ribosome, and is involved in E site tRNA release. Protein L1 is also a translational repressor protein, it controls the translation of the L11 operon by binding to its mRNA. This Chelativorans sp. (strain BNC1) protein is Large ribosomal subunit protein uL1.